Reading from the N-terminus, the 337-residue chain is uncharacterized protein (337 aa).

Residues 12 to 60 (SLNYVDLPDTVHRKIFEYLNPWEIFKLSRISKAIHVTILKNKKFAVKDI) form the F-box domain.

This is an uncharacterized protein from Caenorhabditis elegans.